Consider the following 755-residue polypeptide: Tryptophan 2-monooxygenase (755 aa).

FMN-binding residues include S247, E267, K275, and R295. Residue R295 participates in substrate binding.

Belongs to the tryptophan 2-monooxygenase family. The cofactor is FMN.

It catalyses the reaction L-tryptophan + O2 = indole-3-acetamide + CO2 + H2O. The protein operates within plant hormone metabolism; auxin biosynthesis. This Rhizobium radiobacter (Agrobacterium tumefaciens) protein is Tryptophan 2-monooxygenase (tms1).